The sequence spans 1641 residues: Cortactin-binding protein 2 (1641 aa).

The tract at residues 1-27 (MATDGASCEPDFSRAPEDAAGAPAEAA) is disordered. Residues 119 to 276 (RKMQERMSTQ…EQLKRGNDSK (158 aa)) are a coiled coil. Disordered regions lie at residues 361-433 (SHGD…HPGL), 446-472 (GSNANDPDQNGNTTQSPPSRDVSPTSR), and 488-588 (ALSR…PQGN). The segment covering 385 to 405 (GPSTGSTPDLTSSPTALPSTV) has biased composition (polar residues). Arg491 is modified (asymmetric dimethylarginine). Pro residues predominate over residues 497–506 (AGAPPRPGAP). Polar residues predominate over residues 576–586 (TVASSPSSLPQ). ANK repeat units lie at residues 702 to 732 (GRPTLLQQAAAQGNVTLLSMLLNEEGLDINY), 736 to 765 (DGHSALYSAAKNGHTDCVRLLLNAEAQVNA), 769 to 798 (NGFTPLCAAAAQGHFKCVELLIAYDANINH), 802 to 831 (GGQTPLYLACKNGNKECIKLLLEAGTDRSV), 835 to 864 (DGWTPIHAAVDTGNVDSLKLLMYHGAPAHG), and 903 to 933 (EGWTAAHIAASKGFKNCLEVLCRHGGLEPER). A disordered region spans residues 1442-1468 (AWRKVSTSPRKKSGRFSSPTWNKPDLS). Ser1512 is subject to Phosphoserine. Residues 1544–1641 (LRRFDSSGNN…NSRDLEPTQK (98 aa)) form a disordered region. Polar residues-rich tracts occupy residues 1551 to 1562 (GNNPVFSATVNN) and 1570 to 1579 (KEVSPLSSHQ). Residues 1580 to 1590 (MTERSNSKSKT) are compositionally biased toward basic and acidic residues. The segment covering 1612 to 1626 (SQNTKRSSSSSNTRQ) has biased composition (low complexity).

As to quaternary structure, interacts with CTTN/cortactin SH3 domain. Interacts with STRN, STRN4/zinedin and MOB4/phocein; this interactions mediate the association with the STRIPAK core complex and may regulate dendritic spine distribution of the STRIPAK complex in hippocampal neurons. Activation of glutamate receptors weakens the interaction with STRN and STRN4.

It localises to the cytoplasm. Its subcellular location is the cell cortex. The protein localises to the cell projection. It is found in the dendritic spine. Functionally, regulates the dendritic spine distribution of CTTN/cortactin in hippocampal neurons, and thus controls dendritic spinogenesis and dendritic spine maintenance. Associates with the striatin-interacting phosphatase and kinase (STRIPAK) core complex to regulate dendritic spine distribution of the STRIPAK complex in hippocampal neurons. The sequence is that of Cortactin-binding protein 2 (CTTNBP2) from Ovis aries (Sheep).